The sequence spans 422 residues: ATP-dependent Clp protease ATP-binding subunit ClpX 1 (422 aa).

In terms of domain architecture, ClpX-type ZB spans 4–57 (DRKNRESGKLLYCSFCGKSQHEVRKLIAGPAVFVCDECVELCNDIIREDLQGSE). 4 residues coordinate Zn(2+): Cys16, Cys19, Cys38, and Cys41. Residue 120–127 (PTGSGKTL) participates in ATP binding.

This sequence belongs to the ClpX chaperone family. In terms of assembly, component of the ClpX-ClpP complex. Forms a hexameric ring that, in the presence of ATP, binds to fourteen ClpP subunits assembled into a disk-like structure with a central cavity, resembling the structure of eukaryotic proteasomes.

In terms of biological role, ATP-dependent specificity component of the Clp protease. It directs the protease to specific substrates. Can perform chaperone functions in the absence of ClpP. The polypeptide is ATP-dependent Clp protease ATP-binding subunit ClpX 1 (Methylococcus capsulatus (strain ATCC 33009 / NCIMB 11132 / Bath)).